The primary structure comprises 112 residues: uncharacterized protein (112 aa).

This is an uncharacterized protein from Acanthamoeba polyphaga mimivirus (APMV).